Reading from the N-terminus, the 429-residue chain is S-adenosylmethionine synthase (429 aa).

His14 is a binding site for ATP. Asp16 contacts Mg(2+). Glu42 lines the K(+) pocket. Glu55 and Gln98 together coordinate L-methionine. The segment at 98–108 (QSADINRGVDR) is flexible loop. ATP contacts are provided by residues 165–167 (DAK), 252–253 (KF), Asp261, 267–268 (RK), Ala284, and Lys288. Asp261 is an L-methionine binding site. An L-methionine-binding site is contributed by Lys292.

It belongs to the AdoMet synthase family. In terms of assembly, homotetramer; dimer of dimers. Mg(2+) serves as cofactor. The cofactor is K(+).

The protein localises to the cytoplasm. It catalyses the reaction L-methionine + ATP + H2O = S-adenosyl-L-methionine + phosphate + diphosphate. It participates in amino-acid biosynthesis; S-adenosyl-L-methionine biosynthesis; S-adenosyl-L-methionine from L-methionine: step 1/1. Catalyzes the formation of S-adenosylmethionine (AdoMet) from methionine and ATP. The overall synthetic reaction is composed of two sequential steps, AdoMet formation and the subsequent tripolyphosphate hydrolysis which occurs prior to release of AdoMet from the enzyme. This Porphyromonas gingivalis (strain ATCC BAA-308 / W83) protein is S-adenosylmethionine synthase.